Here is a 625-residue protein sequence, read N- to C-terminus: Threonine--tRNA ligase (625 aa).

An editing domain region spans residues 1–147; it reads MRILLIHSDY…TIVPGEAKKE (147 aa). Residues 206-505 are catalytic; it reads PHVKIMLEQE…MKKGKKPMYP (300 aa). C298, H350, and H474 together coordinate Zn(2+).

The protein belongs to the class-II aminoacyl-tRNA synthetase family. Homodimer. It depends on Zn(2+) as a cofactor.

Its subcellular location is the cytoplasm. It carries out the reaction tRNA(Thr) + L-threonine + ATP = L-threonyl-tRNA(Thr) + AMP + diphosphate + H(+). Its function is as follows. Catalyzes the attachment of threonine to tRNA(Thr) in a two-step reaction: L-threonine is first activated by ATP to form Thr-AMP and then transferred to the acceptor end of tRNA(Thr). Also edits incorrectly charged L-seryl-tRNA(Thr). The sequence is that of Threonine--tRNA ligase from Thermococcus sibiricus (strain DSM 12597 / MM 739).